We begin with the raw amino-acid sequence, 175 residues long: Regenerating islet-derived protein 3-gamma (175 aa).

The signal sequence occupies residues 1–26 (MLPPMALPSVSWMLLSCLILLCQVQG). The propeptide occupies 27–37 (EETQKELPSPR). 3 cysteine pairs are disulfide-bonded: cysteine 40/cysteine 51, cysteine 68/cysteine 171, and cysteine 146/cysteine 163. In terms of domain architecture, C-type lectin spans 47–172 (YGSPCYALFL…CDAKLPYVCK (126 aa)). Residues 103–118 (WIGLHDPTQGSEPDGD) form a sufficient to activate EXTL3 region. Histidine 107 provides a ligand contact to Zn(2+). The EPN motif lies at 114–116 (EPD). Zn(2+)-binding residues include glutamate 121 and histidine 145.

As to quaternary structure, forms a hexameric membrane-permeabilizing oligomeric pore on membrane phospholipids. The hexamer is formed by three dimers related by helical symmetry. Forms filaments, filamentation traps pore complexes and limits damage to host cells. Interacts with EXTL3. In terms of processing, proteolytic processing by trypsin removes an inhibitory N-terminal propeptide and is essential for peptidoglycan binding and antibacterial activity. As to expression, predominantly expressed in pancreas, where it may be restricted to exocrine pancreas. Moderate expression levels in testis and weak in heart, kidney and placenta.

Its subcellular location is the secreted. It is found in the cytoplasm. With respect to regulation, lipopolysaccharide inhibits pore-forming activity, explaining why is bactericidal for Gram-positive but not Gram-negative bacteria. In terms of biological role, bactericidal C-type lectin which acts exclusively against Gram-positive bacteria and mediates bacterial killing by binding to surface-exposed carbohydrate moieties of peptidoglycan. Restricts bacterial colonization of the intestinal epithelial surface and consequently limits activation of adaptive immune responses by the microbiota. Acts as a hormone in response to different stimuli like anti-inflammatory signals, such as IL17A, or gut microbiome. Is secreted by different cell types to activate its receptor EXTL3 and induce cell specific signaling pathways. Induced by IL17A in keratinocytes, regulates keratinocyte proliferation and differentiation after skin injury. In parallel, inhibits skin inflammation through the inhibition of inflammatory cytokines such as IL6 and TNF. Induced by IL22 in lung epithelial cells, inhibits cytokine production and regulates allergic airway inflammation. Induced in small intestine by inulin-enriched diet and Lactobacillus gasseri enriched microbiome, plays a role in the improvement of gut barrier function, the regulation of energy balance and glucose levels. Modulates microbiota composition in duodenal contents. Produced by nociceptor in response to endotoxins, prevents endotoxic death by targeting kynurenine pathway in microglia. Its function is as follows. Has bacteriostatic activity. Functionally, has bactericidal activity against L.monocytogenes and methicillin-resistant S.aureus. The protein is Regenerating islet-derived protein 3-gamma of Homo sapiens (Human).